Reading from the N-terminus, the 130-residue chain is Small ribosomal subunit protein uS11 (130 aa).

It belongs to the universal ribosomal protein uS11 family. In terms of assembly, part of the 30S ribosomal subunit. Interacts with proteins S7 and S18. Binds to IF-3.

Functionally, located on the platform of the 30S subunit, it bridges several disparate RNA helices of the 16S rRNA. Forms part of the Shine-Dalgarno cleft in the 70S ribosome. The protein is Small ribosomal subunit protein uS11 of Prochlorococcus marinus (strain MIT 9313).